A 348-amino-acid polypeptide reads, in one-letter code: Dihydroorotase (348 aa).

Zn(2+)-binding residues include His-17 and His-19. Residues 19–21 and Asn-45 each bind substrate; that span reads HLR. Residues Lys-103, His-140, and His-178 each contribute to the Zn(2+) site. The residue at position 103 (Lys-103) is an N6-carboxylysine. His-140 contributes to the substrate binding site. Substrate is bound at residue Leu-223. Asp-251 is a Zn(2+) binding site. The active site involves Asp-251. Substrate-binding residues include His-255 and Ala-267.

The protein belongs to the metallo-dependent hydrolases superfamily. DHOase family. Class II DHOase subfamily. Homodimer. Zn(2+) is required as a cofactor.

The enzyme catalyses (S)-dihydroorotate + H2O = N-carbamoyl-L-aspartate + H(+). It functions in the pathway pyrimidine metabolism; UMP biosynthesis via de novo pathway; (S)-dihydroorotate from bicarbonate: step 3/3. Catalyzes the reversible cyclization of carbamoyl aspartate to dihydroorotate. This Yersinia pseudotuberculosis serotype I (strain IP32953) protein is Dihydroorotase.